A 1783-amino-acid polypeptide reads, in one-letter code: MAKTGAEDHREALSQSSLSLLTEAMEVLQQSSPEGTLDGNTVNPIYKYILNDLPREFMSSQAKAVIKTTDDYLQSQFGPNRLVHSAAVSEGSGLQDCSTHQTASDHSHDEISDLDSYKSNSKNNSCSISASKRNRPVSAPVGQLRVAEFSSLKFQSARNWQKLSQRHKLQPRVIKVTAYKNGSRTVFARVTVPTITLLLEECTEKLNLNMAARRVFLADGKEALEPEDIPHEADVYVSTGEPFLNPFKKIKDHLLLIKKVTWTMNGLMLPTDIKRRKTKPVLSIRMKKLTERTSVRILFFKNGMGQDGHEITVGKETMKKVLDTCTIRMNLNLPARYFYDLYGRKIEDISKVPLLEKCLQNSITPLRGLLWVSKGEGFSPSGAKMYIQGVLLALYQRLKSAKKYYKQLNLVMNEQKEKITEKVILSMTAKEHHKEQEEVSRLIDELQTAIKSNIGHLCKLGPQLQAEQEQFSSYVYQHIKSLPANTLVPGGLQLKVFENGKNTGEISVGISKKDLGSDSPIQTDHMMERLLLKIHQRLQGSSINPPGLNYSSMRLFDENGQEIKNPLSLKNEQKIWVSYGRAYRSPLNLALGLTFDRVSAFARGDIMVAYKTFLDPNAVLLPGCGNWEVCEGFPINFNCTSQQIPDQFEKVDLENHFLQNKVDPNIVLHASVSIGKWSFSGSEASSRSQIAPSILWPVASVWLITKTGMILSRAITQGCLAIGHPIRVKAAEGTSLEGYKLILQKRHSGDDSQKWVFGTDGCIYSKAYPQFVLTYLEELNAQVDVTQTEYHIHHGAWTTAHQEHGRNLAEEVLQESASNLGLKQLPEPSDTHLMPEGSLEETGELTVALVRKLEEKHPKASAQRWAIKHEGTSKPGQWKHSRVENPLWNKLTYMWPVLPSGQLNEEFDWPIQGLLVPSSPPMKKPICKTTEPYAPVRLRVLQNGEKNKNRSVTILGPDISPGRKTQCTEILNLPSAARRLYNEKGKEIFALKDLQRDELVYVSCGELWINPDLSIAQQKKQIFLRNLESDIAKIQIFCSTHKIEALVLEVQSDIVSGSKLAVHKPVAIFGEEKQVTEPEEKQMQEDPLTTENASSEILDSHVRAHLRMKACHTLPRYAWQETSHDFDEDDSLPKKTEKGLFENVEPQKKHSCSPKHSKLHKHCHQQFEYRDGQIISHAAPQLVLGVQGPNLRSGMEVVLVEKKSDGSHQRWIHQEDSRTFHLVSNPDLVLAVSMTKTRNEVCGYPVIVQKYKPYNNGAANQKWHYMKNIKALVAFHSTALDKEITSANYAGVCTSSVIKEENIDQPGYCYLSPDGKRKTMLCLACGQSMRTEKGLKQLLPGVPFLCISGTKTQKPFLQGPFKVISVAEVDLSCDKAEKTLSYYQARLLSLRMKTCTQAASHSGMAATHQKAVKIIAYKNGDGYRNGKLIVAGTFPMLLTECTEQLGLARAASKVYTKDGTPIFTLRDLVLWALDESFLQRDSEKQKQDAAPVGKEQIIVEKNPRMKVKNRLFAKSVTSDSLDGIDKSLLTLILRNPIAIWVSCGEPFLPPNALQKAEKLEKQNWLKKDRILADLDTMRHKMRQLKGRRVAACQPATMVPTKSPVQPVVVEGGWTEQTQQEIKLMELIRHTEAHLSEIQEMESKINFPIATKRIAVKPSNLYKQPNTKRVWIYLNGGRPEDGTYAWGKTISELLQDCSSRLKMTHPARALYTPSGEPIQSWDDIERDMVICVSMGHGFKTPKELKQLMEIRANYARIRRQQGPQATDIVVSPSTKLLSLAHLHN.

Residues 93-133 (GLQDCSTHQTASDHSHDEISDLDSYKSNSKNNSCSISASKR) form a disordered region. The span at 117–131 (YKSNSKNNSCSISAS) shows a compositional bias: low complexity. A Doublecortin 1 domain is found at 168 to 252 (KLQPRVIKVT…FLNPFKKIKD (85 aa)). The Ricin B-type lectin 1 domain maps to 702-800 (WLITKTGMIL…HIHHGAWTTA (99 aa)). The segment at 860–880 (ASAQRWAIKHEGTSKPGQWKH) is disordered. The region spanning 925-1015 (PICKTTEPYA…ELWINPDLSI (91 aa)) is the Doublecortin 2 domain. Residues 1151–1266 (SCSPKHSKLH…GAANQKWHYM (116 aa)) form the Ricin B-type lectin 2 domain.

Interacts with dynein intermediate chain, tubulin, RAB8A, RAB3IP, NUDC, PAFAH1B1 and DCTN1.

The protein resides in the midbody. Its subcellular location is the midbody ring. It localises to the cytoplasm. The protein localises to the cytoskeleton. It is found in the spindle. Its function is as follows. Microtubule-binding protein which plays an important role in mediating dynein-dependent transport of RAB8A-positive vesicles to the midbody during cytokinesis. This chain is Doublecortin domain-containing protein 1, found in Homo sapiens (Human).